A 165-amino-acid chain; its full sequence is Large ribosomal subunit protein uL10 (165 aa).

Belongs to the universal ribosomal protein uL10 family. Part of the ribosomal stalk of the 50S ribosomal subunit. The N-terminus interacts with L11 and the large rRNA to form the base of the stalk. The C-terminus forms an elongated spine to which L12 dimers bind in a sequential fashion forming a multimeric L10(L12)X complex.

In terms of biological role, forms part of the ribosomal stalk, playing a central role in the interaction of the ribosome with GTP-bound translation factors. The protein is Large ribosomal subunit protein uL10 of Mycoplasma mycoides subsp. mycoides SC (strain CCUG 32753 / NCTC 10114 / PG1).